Here is a 284-residue protein sequence, read N- to C-terminus: Cell division protein DivIB (284 aa).

The disordered stretch occupies residues 1-21; the sequence is MFGKRKDSKNKAMRDNEELTP. Over 1 to 63 the chain is Cytoplasmic; sequence MFGKRKDSKN…GLRKRRLQKR (63 aa). Residues 64–84 form a helical membrane-spanning segment; it reads VITLASIFGISAIISLYAILP. Over 85-284 the chain is Extracellular; it reads VSRVSNIEIE…VGAYAYPYBK (200 aa). Residues 86-156 form the POTRA domain; it reads SRVSNIEIEG…NVVKFKVTEY (71 aa).

It belongs to the FtsQ/DivIB family. DivIB subfamily.

The protein localises to the cell membrane. In terms of biological role, cell division protein that may be involved in stabilizing or promoting the assembly of the division complex. In Ligilactobacillus salivarius (strain CECT 5713) (Lactobacillus salivarius), this protein is Cell division protein DivIB.